Reading from the N-terminus, the 194-residue chain is Large ribosomal subunit protein eL15 (194 aa).

Positions 160–194 are disordered; it reads RGLTSAGKKGRGLMYKGKGTEKVRPSVRANSKKAK.

Belongs to the eukaryotic ribosomal protein eL15 family.

In Methanococcus maripaludis (strain C7 / ATCC BAA-1331), this protein is Large ribosomal subunit protein eL15.